Here is a 253-residue protein sequence, read N- to C-terminus: Succinate dehydrogenase [ubiquinone] iron-sulfur subunit, mitochondrial (253 aa).

The region spanning 23–114 (FKIYRWNPDK…TTKIYPLPHM (92 aa)) is the 2Fe-2S ferredoxin-type domain. Residues cysteine 74, cysteine 79, cysteine 82, and cysteine 94 each coordinate [2Fe-2S] cluster. The 4Fe-4S ferredoxin-type domain occupies 156–186 (DRKKLDGLYECILCACCSTSCPSYWWNQEEY). Residues cysteine 166, cysteine 169, and cysteine 172 each coordinate [4Fe-4S] cluster. Cysteine 176 is a [3Fe-4S] cluster binding site. Tryptophan 181 is a binding site for a ubiquinone. The [3Fe-4S] cluster site is built by cysteine 223 and cysteine 229. Cysteine 233 contacts [4Fe-4S] cluster.

This sequence belongs to the succinate dehydrogenase/fumarate reductase iron-sulfur protein family. As to quaternary structure, component of complex II composed of four subunits: a flavoprotein (FP), an iron-sulfur protein (IP), and a cytochrome b composed of a large and a small subunit. Requires [2Fe-2S] cluster as cofactor. It depends on [3Fe-4S] cluster as a cofactor. [4Fe-4S] cluster serves as cofactor.

It localises to the mitochondrion inner membrane. The catalysed reaction is a quinone + succinate = fumarate + a quinol. Its pathway is carbohydrate metabolism; tricarboxylic acid cycle; fumarate from succinate (eukaryal route): step 1/1. Its function is as follows. Iron-sulfur protein (IP) subunit of succinate dehydrogenase (SDH) that is involved in complex II of the mitochondrial electron transport chain and is responsible for transferring electrons from succinate to ubiquinone (coenzyme Q). The chain is Succinate dehydrogenase [ubiquinone] iron-sulfur subunit, mitochondrial (SDH2) from Candida glabrata (strain ATCC 2001 / BCRC 20586 / JCM 3761 / NBRC 0622 / NRRL Y-65 / CBS 138) (Yeast).